A 528-amino-acid chain; its full sequence is Cytochrome P450 1A5 (528 aa).

Residue Cys467 participates in heme binding.

It belongs to the cytochrome P450 family. Heme is required as a cofactor.

The protein resides in the endoplasmic reticulum membrane. It localises to the microsome membrane. The enzyme catalyses an organic molecule + reduced [NADPH--hemoprotein reductase] + O2 = an alcohol + oxidized [NADPH--hemoprotein reductase] + H2O + H(+). Its function is as follows. Cytochromes P450 are a group of heme-thiolate monooxygenases. In liver microsomes, this enzyme is involved in an NADPH-dependent electron transport pathway. It oxidizes a variety of structurally unrelated compounds, including steroids, fatty acids, and xenobiotics. This is Cytochrome P450 1A5 (CYP1A5) from Gallus gallus (Chicken).